The chain runs to 563 residues: Arginine--tRNA ligase (563 aa).

This sequence belongs to the class-I aminoacyl-tRNA synthetase family. Monomer.

It carries out the reaction tRNA(Arg) + L-arginine + ATP = L-arginyl-tRNA(Arg) + AMP + diphosphate. The chain is Arginine--tRNA ligase from Encephalitozoon cuniculi (strain GB-M1) (Microsporidian parasite).